The following is a 195-amino-acid chain: Probable GTP-binding protein EngB (195 aa).

An EngB-type G domain is found at Leu22–Glu194. Residues Gly30–Ser37, Gly56–Ser60, Asp74–Gly77, Thr141–Asp144, and Thr173–Ser175 each bind GTP. Positions 37 and 58 each coordinate Mg(2+).

This sequence belongs to the TRAFAC class TrmE-Era-EngA-EngB-Septin-like GTPase superfamily. EngB GTPase family. Requires Mg(2+) as cofactor.

Functionally, necessary for normal cell division and for the maintenance of normal septation. This chain is Probable GTP-binding protein EngB, found in Thermotoga sp. (strain RQ2).